The sequence spans 444 residues: ATP-dependent protease ATPase subunit HslU (444 aa).

Residues I18 and 60–65 (GVGKTE) each bind ATP. Residues 141 to 161 (DAWGNNEEGNNDSGTRQSFRK) form a disordered region. Positions 147 to 157 (EEGNNDSGTRQ) are enriched in polar residues. ATP-binding residues include D257, E322, and R394.

Belongs to the ClpX chaperone family. HslU subfamily. In terms of assembly, a double ring-shaped homohexamer of HslV is capped on each side by a ring-shaped HslU homohexamer. The assembly of the HslU/HslV complex is dependent on binding of ATP.

It localises to the cytoplasm. Its function is as follows. ATPase subunit of a proteasome-like degradation complex; this subunit has chaperone activity. The binding of ATP and its subsequent hydrolysis by HslU are essential for unfolding of protein substrates subsequently hydrolyzed by HslV. HslU recognizes the N-terminal part of its protein substrates and unfolds these before they are guided to HslV for hydrolysis. This chain is ATP-dependent protease ATPase subunit HslU, found in Aliivibrio fischeri (strain ATCC 700601 / ES114) (Vibrio fischeri).